The primary structure comprises 49 residues: Large ribosomal subunit protein bL33B (49 aa).

This sequence belongs to the bacterial ribosomal protein bL33 family.

In Lactobacillus helveticus (strain DPC 4571), this protein is Large ribosomal subunit protein bL33B.